Consider the following 271-residue polypeptide: Cobalt import ATP-binding protein CbiO (271 aa).

One can recognise an ABC transporter domain in the interval 2 to 236; sequence LATSDLWFRY…TEAMEHAGLT (235 aa). 34–41 provides a ligand contact to ATP; it reads GANGCGKS.

Belongs to the ABC transporter superfamily. Cobalt importer (TC 3.A.1.18.1) family. Forms an energy-coupling factor (ECF) transporter complex composed of an ATP-binding protein (A component, CbiO), a transmembrane protein (T component, CbiQ) and 2 possible substrate-capture proteins (S components, CbiM and CbiN) of unknown stoichimetry.

The protein resides in the cell inner membrane. Its pathway is cofactor biosynthesis; adenosylcobalamin biosynthesis. Its function is as follows. Part of the energy-coupling factor (ECF) transporter complex CbiMNOQ involved in cobalt import. Presumably responsible for energy coupling to the transport system. In Salmonella typhi, this protein is Cobalt import ATP-binding protein CbiO.